The primary structure comprises 522 residues: Ribonuclease Y (522 aa).

Residues 7-23 (SGSSAAVISGLVGFYIS) traverse the membrane as a helical segment. The KH domain occupies 212–278 (LTNLVHLNDD…TKTLELLIQD (67 aa)). Positions 338-431 (ALSHTLEVAH…VCAADALSAA (94 aa)) constitute an HD domain.

Belongs to the RNase Y family.

It localises to the cell membrane. Its function is as follows. Endoribonuclease that initiates mRNA decay. In Sulfurimonas denitrificans (strain ATCC 33889 / DSM 1251) (Thiomicrospira denitrificans (strain ATCC 33889 / DSM 1251)), this protein is Ribonuclease Y.